Here is a 264-residue protein sequence, read N- to C-terminus: Hydroxyethylthiazole kinase (264 aa).

Met43 provides a ligand contact to substrate. 2 residues coordinate ATP: Lys119 and Ser165. Gly192 serves as a coordination point for substrate.

This sequence belongs to the Thz kinase family. The cofactor is Mg(2+).

It carries out the reaction 5-(2-hydroxyethyl)-4-methylthiazole + ATP = 4-methyl-5-(2-phosphooxyethyl)-thiazole + ADP + H(+). It participates in cofactor biosynthesis; thiamine diphosphate biosynthesis; 4-methyl-5-(2-phosphoethyl)-thiazole from 5-(2-hydroxyethyl)-4-methylthiazole: step 1/1. Catalyzes the phosphorylation of the hydroxyl group of 4-methyl-5-beta-hydroxyethylthiazole (THZ). This chain is Hydroxyethylthiazole kinase, found in Methanocorpusculum labreanum (strain ATCC 43576 / DSM 4855 / Z).